The sequence spans 207 residues: GILT-like protein 2 (207 aa).

The signal sequence occupies residues 1 to 19 (MRAAVFVCLLLGWVGVATP). A disulfide bond links Cys40 and Cys43. Asn182 carries an N-linked (GlcNAc...) asparagine glycan.

It belongs to the GILT family.

It localises to the secreted. In terms of biological role, probable lysosomal thiol reductase that can reduce protein disulfide bonds. Involved in the immune response to bacterial infection. This Drosophila melanogaster (Fruit fly) protein is GILT-like protein 2.